Reading from the N-terminus, the 435-residue chain is Serine--tRNA ligase (435 aa).

242-244 (TAE) serves as a coordination point for L-serine. Residue 273-275 (RSE) coordinates ATP. Residue Glu296 participates in L-serine binding. 360 to 363 (EISS) is an ATP binding site. Ser396 contributes to the L-serine binding site.

It belongs to the class-II aminoacyl-tRNA synthetase family. Type-1 seryl-tRNA synthetase subfamily. As to quaternary structure, homodimer. The tRNA molecule binds across the dimer.

The protein resides in the cytoplasm. It catalyses the reaction tRNA(Ser) + L-serine + ATP = L-seryl-tRNA(Ser) + AMP + diphosphate + H(+). It carries out the reaction tRNA(Sec) + L-serine + ATP = L-seryl-tRNA(Sec) + AMP + diphosphate + H(+). The protein operates within aminoacyl-tRNA biosynthesis; selenocysteinyl-tRNA(Sec) biosynthesis; L-seryl-tRNA(Sec) from L-serine and tRNA(Sec): step 1/1. Catalyzes the attachment of serine to tRNA(Ser). Is also able to aminoacylate tRNA(Sec) with serine, to form the misacylated tRNA L-seryl-tRNA(Sec), which will be further converted into selenocysteinyl-tRNA(Sec). This Vibrio vulnificus (strain CMCP6) protein is Serine--tRNA ligase.